Consider the following 504-residue polypeptide: Anaerobic nitric oxide reductase transcription regulator NorR (504 aa).

At D57 the chain carries 4-aspartylphosphate. Residues 187-416 (MIGLSPGMTQ…LEHAIHRAVV (230 aa)) enclose the Sigma-54 factor interaction domain. ATP is bound by residues 215–222 (GETGTGKE) and 278–287 (ADNGTLFLDE). A DNA-binding region (H-T-H motif) is located at residues 479–498 (WAACARMLETDVANLHRLAK).

It functions in the pathway nitrogen metabolism; nitric oxide reduction. In terms of biological role, required for the expression of anaerobic nitric oxide (NO) reductase, acts as a transcriptional activator for at least the norVW operon. Activation also requires sigma-54. This Escherichia coli O8 (strain IAI1) protein is Anaerobic nitric oxide reductase transcription regulator NorR.